Consider the following 696-residue polypeptide: Glycosyltransferase GlyA (696 aa).

A GT2 domain region spans residues 1 to 301 (MLVDDKITVI…NQLSRQEESE (301 aa)). A GT8 domain region spans residues 302-556 (KKAIVLAANY…TELGQNHHLH (255 aa)). UDP is bound by residues 308–313 (AANYGY) and 399–400 (DC). Mn(2+)-binding residues include aspartate 399, aspartate 401, and histidine 518. A UDP-binding site is contributed by 518–524 (HYLSHRK).

It in the N-terminal section; belongs to the glycosyltransferase 2 family. This sequence in the central section; belongs to the glycosyltransferase 8 family.

It participates in protein modification; protein glycosylation. Its function is as follows. Involved in the polymorphic O-glycosylation of the serine-rich repeat protein PsrP. Catalyzes the fourth step in glycosylation of PsrP in this bacteria. Can transfer the sugar from UDP-galactose to the terminal sugar moiety of PsrP-GlcNAc-Glc-Gal or of PsrP-GlcNAc-Glc-Glc (using truncated substrates with the PsrP SSR1 domain). Has hydrolytic activity against UDP-galactose and to a lesser extent against UDP-glucose. The protein is Glycosyltransferase GlyA of Streptococcus pneumoniae serotype 4 (strain ATCC BAA-334 / TIGR4).